The chain runs to 132 residues: Small ribosomal subunit protein uS8 (132 aa).

The protein belongs to the universal ribosomal protein uS8 family. Part of the 30S ribosomal subunit. Contacts proteins S5 and S12.

Functionally, one of the primary rRNA binding proteins, it binds directly to 16S rRNA central domain where it helps coordinate assembly of the platform of the 30S subunit. In Rickettsia conorii (strain ATCC VR-613 / Malish 7), this protein is Small ribosomal subunit protein uS8.